We begin with the raw amino-acid sequence, 307 residues long: Agmatinase (307 aa).

His-128, Asp-151, His-153, Asp-155, Asp-232, and Asp-234 together coordinate Mn(2+).

It belongs to the arginase family. Agmatinase subfamily. Mn(2+) is required as a cofactor.

It carries out the reaction agmatine + H2O = urea + putrescine. It functions in the pathway amine and polyamine biosynthesis; putrescine biosynthesis via agmatine pathway; putrescine from agmatine: step 1/1. Functionally, catalyzes the formation of putrescine from agmatine. The sequence is that of Agmatinase from Neisseria meningitidis serogroup C (strain 053442).